Here is a 255-residue protein sequence, read N- to C-terminus: Proteasome subunit alpha (255 aa).

The tract at residues 224 to 255 is disordered; that stretch reads RLEELLGERGPAQHAPEEPADPEPEPPIAPPG.

The protein belongs to the peptidase T1A family. As to quaternary structure, the 20S proteasome core is composed of 14 alpha and 14 beta subunits that assemble into four stacked heptameric rings, resulting in a barrel-shaped structure. The two inner rings, each composed of seven catalytic beta subunits, are sandwiched by two outer rings, each composed of seven alpha subunits. The catalytic chamber with the active sites is on the inside of the barrel. Has a gated structure, the ends of the cylinder being occluded by the N-termini of the alpha-subunits. Is capped by the proteasome-associated ATPase, ARC.

The protein localises to the cytoplasm. It participates in protein degradation; proteasomal Pup-dependent pathway. Its activity is regulated as follows. The formation of the proteasomal ATPase ARC-20S proteasome complex, likely via the docking of the C-termini of ARC into the intersubunit pockets in the alpha-rings, may trigger opening of the gate for substrate entry. Interconversion between the open-gate and close-gate conformations leads to a dynamic regulation of the 20S proteasome proteolysis activity. Functionally, component of the proteasome core, a large protease complex with broad specificity involved in protein degradation. The polypeptide is Proteasome subunit alpha (Nocardioides sp. (strain ATCC BAA-499 / JS614)).